A 321-amino-acid chain; its full sequence is Protein FAM110C (321 aa).

2 disordered regions span residues 1 to 84 (MRAL…APAP) and 111 to 203 (RGSG…SQSD). Basic and acidic residues-rich tracts occupy residues 15–46 (LLPR…DRAK) and 131–145 (GKDK…DEGK). Over residues 169–181 (APAARSAAPSSVP) the composition is skewed to low complexity. S241 is subject to Phosphoserine.

Belongs to the FAM110 family. In terms of assembly, interacts with AKT1; the interaction is transient and follows AKT1 activation. Interacts with PPP2CA and alpha-tubulin. Detected in stomach, thyroid, trachea, adrenal gland and testis, and at low levels in prostate, ovary, intestine, colon, spinal cord and lymph node.

It localises to the cytoplasm. Its subcellular location is the cytoskeleton. The protein localises to the microtubule organizing center. It is found in the centrosome. The protein resides in the spindle pole. It localises to the nucleus. May play a role in microtubule organization. May play a role in cell spreading and cell migration of epithelial cells; the function may involve the AKT1 signaling pathway. In Homo sapiens (Human), this protein is Protein FAM110C (FAM110C).